The chain runs to 328 residues: Alcohol-sensitive RING finger protein 1 (328 aa).

The RING-type 1; atypical zinc finger occupies 18 to 61; the sequence is CSICWESMPSGVGRLMPCGHEYHLACIRKWFHLHSGNRSCPVCR. Residues 129-177 form an RING-type 2; atypical zinc finger; sequence CGICGEMNGDIDTCCNRCHHMYHHSCLGQLLVEVNAEREQGWSHCIFCY.

It localises to the cytoplasm. The protein localises to the nucleus. Functionally, required for tolerance to alcohol. In Eremothecium gossypii (strain ATCC 10895 / CBS 109.51 / FGSC 9923 / NRRL Y-1056) (Yeast), this protein is Alcohol-sensitive RING finger protein 1 (ASR1).